Consider the following 505-residue polypeptide: Trans-cinnamate 4-monooxygenase (505 aa).

A helical transmembrane segment spans residues 3–23 (LLLLEKTLLGSFVAVLVAILV). Residues 213-218 (RSRLAQ) and alanine 306 contribute to the (E)-cinnamate site. Cysteine 447 contributes to the heme binding site.

It belongs to the cytochrome P450 family. Requires heme as cofactor.

It is found in the membrane. The enzyme catalyses (E)-cinnamate + reduced [NADPH--hemoprotein reductase] + O2 = (E)-4-coumarate + oxidized [NADPH--hemoprotein reductase] + H2O + H(+). Its pathway is phenylpropanoid metabolism; trans-4-coumarate biosynthesis; trans-4-coumarate from trans-cinnamate: step 1/1. Its function is as follows. Catalyzes the first oxidative step of the phenylpropanoid pathway in higher plants by transforming trans-cinnamate into p-coumarate. The compounds formed by this pathway are essential components for lignification, pollination, and defense against ultraviolet light, predators and pathogens. This Populus kitakamiensis (Aspen) protein is Trans-cinnamate 4-monooxygenase (CYP73A16).